Consider the following 495-residue polypeptide: Glycerol kinase (495 aa).

Position 11 (Thr-11) interacts with ADP. Residues Thr-11, Thr-12, and Ser-13 each contribute to the ATP site. Thr-11 contacts sn-glycerol 3-phosphate. Arg-15 contacts ADP. The sn-glycerol 3-phosphate site is built by Arg-81, Glu-82, Tyr-133, and Asp-242. Arg-81, Glu-82, Tyr-133, Asp-242, and Gln-243 together coordinate glycerol. ADP-binding residues include Thr-264 and Gly-307. Residues Thr-264, Gly-307, Gln-311, and Gly-409 each coordinate ATP. The ADP site is built by Gly-409 and Asn-413.

It belongs to the FGGY kinase family.

The catalysed reaction is glycerol + ATP = sn-glycerol 3-phosphate + ADP + H(+). It participates in polyol metabolism; glycerol degradation via glycerol kinase pathway; sn-glycerol 3-phosphate from glycerol: step 1/1. Inhibited by fructose 1,6-bisphosphate (FBP). Key enzyme in the regulation of glycerol uptake and metabolism. Catalyzes the phosphorylation of glycerol to yield sn-glycerol 3-phosphate. This is Glycerol kinase from Borrelia hermsii (strain HS1 / DAH).